We begin with the raw amino-acid sequence, 142 residues long: Regulatory protein RecX (142 aa).

This sequence belongs to the RecX family.

The protein localises to the cytoplasm. Modulates RecA activity. The sequence is that of Regulatory protein RecX from Thermus thermophilus (strain ATCC BAA-163 / DSM 7039 / HB27).